Consider the following 179-residue polypeptide: Large ribosomal subunit protein uL5 (179 aa).

It belongs to the universal ribosomal protein uL5 family. Part of the 50S ribosomal subunit; part of the 5S rRNA/L5/L18/L25 subcomplex. Contacts the 5S rRNA and the P site tRNA. Forms a bridge to the 30S subunit in the 70S ribosome.

In terms of biological role, this is one of the proteins that bind and probably mediate the attachment of the 5S RNA into the large ribosomal subunit, where it forms part of the central protuberance. In the 70S ribosome it contacts protein S13 of the 30S subunit (bridge B1b), connecting the 2 subunits; this bridge is implicated in subunit movement. Contacts the P site tRNA; the 5S rRNA and some of its associated proteins might help stabilize positioning of ribosome-bound tRNAs. The protein is Large ribosomal subunit protein uL5 of Deinococcus geothermalis (strain DSM 11300 / CIP 105573 / AG-3a).